A 345-amino-acid chain; its full sequence is Phosphoribosylformylglycinamidine cyclo-ligase (345 aa).

It belongs to the AIR synthase family.

Its subcellular location is the cytoplasm. The enzyme catalyses 2-formamido-N(1)-(5-O-phospho-beta-D-ribosyl)acetamidine + ATP = 5-amino-1-(5-phospho-beta-D-ribosyl)imidazole + ADP + phosphate + H(+). It functions in the pathway purine metabolism; IMP biosynthesis via de novo pathway; 5-amino-1-(5-phospho-D-ribosyl)imidazole from N(2)-formyl-N(1)-(5-phospho-D-ribosyl)glycinamide: step 2/2. In Chromobacterium violaceum (strain ATCC 12472 / DSM 30191 / JCM 1249 / CCUG 213 / NBRC 12614 / NCIMB 9131 / NCTC 9757 / MK), this protein is Phosphoribosylformylglycinamidine cyclo-ligase.